Here is a 185-residue protein sequence, read N- to C-terminus: SDAEKVYDIEGYPVFLGSEYYIVSAIIGAGGGGVRPGRTRGSMCPMSIIQEQSDLQMGLPVRFSSPEESQGKIYTDTELEIEFVEKPDCAESSKWVIVKDSGEARVAIGGSEDHPQGELVRGFFKIEKLGSLAYKLVFCPKSSSGSCSDIGINYEGRRSLVLKSSDDSPFRVVFVKPRSGSETES.

2 disulfides stabilise this stretch: Cys-44–Cys-89 and Cys-139–Cys-147.

It belongs to the protease inhibitor I3 (leguminous Kunitz-type inhibitor) family.

The protein localises to the secreted. Inhibits bovine trypsin and human plasma kallikrein. The sequence is that of Kunitz-type serine protease inhibitor DrTI from Delonix regia (Royal poinciana).